We begin with the raw amino-acid sequence, 400 residues long: 3-phenylpropionate/cinnamic acid dioxygenase ferredoxin--NAD(+) reductase component (400 aa).

FAD is bound at residue 5 to 36; it reads TIIIVGGGQAAAMAAASLRQQGFTGELHLFSD. Position 146–174 (146–174) interacts with NAD(+); it reads SVVIVGAGTIGLELAASATQRGCKATVIE.

It belongs to the bacterial ring-hydroxylating dioxygenase ferredoxin reductase family. This dioxygenase system consists of four proteins: the two subunits of the hydroxylase component (HcaE and HcaF), a ferredoxin (HcaC) and a ferredoxin reductase (HcaD). Requires FAD as cofactor.

It carries out the reaction 2 reduced [2Fe-2S]-[ferredoxin] + NAD(+) + H(+) = 2 oxidized [2Fe-2S]-[ferredoxin] + NADH. Its pathway is aromatic compound metabolism; 3-phenylpropanoate degradation. Its function is as follows. Part of the multicomponent 3-phenylpropionate dioxygenase, that converts 3-phenylpropionic acid (PP) and cinnamic acid (CI) into 3-phenylpropionate-dihydrodiol (PP-dihydrodiol) and cinnamic acid-dihydrodiol (CI-dihydrodiol), respectively. The sequence is that of 3-phenylpropionate/cinnamic acid dioxygenase ferredoxin--NAD(+) reductase component from Escherichia coli O7:K1 (strain IAI39 / ExPEC).